We begin with the raw amino-acid sequence, 334 residues long: Protein NlpD/LppB homolog (334 aa).

One can recognise a LysM domain in the interval 89–133 (IFYIVKSKDTMYSIAKNSGYNYHELSKFNSIKKPYKIIIGQKIWM).

This sequence belongs to the E.coli NlpD/Haemophilus LppB family.

This chain is Protein NlpD/LppB homolog, found in Buchnera aphidicola subsp. Acyrthosiphon pisum (strain APS) (Acyrthosiphon pisum symbiotic bacterium).